Reading from the N-terminus, the 342-residue chain is Protein-glutamate methylesterase/protein-glutamine glutaminase 4 (342 aa).

The Response regulatory domain occupies 2 to 119 (NIGIVNDLPL…GGSADPSQPL (118 aa)). At D53 the chain carries 4-aspartylphosphate. Positions 144–337 (PAPQGALPPL…DQLISLVQRN (194 aa)) constitute a CheB-type methylesterase domain. Residues S159, H186, and D279 contribute to the active site.

It belongs to the CheB family. Phosphorylated by CheA. Phosphorylation of the N-terminal regulatory domain activates the methylesterase activity.

Its subcellular location is the cytoplasm. It carries out the reaction [protein]-L-glutamate 5-O-methyl ester + H2O = L-glutamyl-[protein] + methanol + H(+). The catalysed reaction is L-glutaminyl-[protein] + H2O = L-glutamyl-[protein] + NH4(+). Its function is as follows. Involved in chemotaxis. Part of a chemotaxis signal transduction system that modulates chemotaxis in response to various stimuli. Catalyzes the demethylation of specific methylglutamate residues introduced into the chemoreceptors (methyl-accepting chemotaxis proteins or MCP) by CheR. Also mediates the irreversible deamidation of specific glutamine residues to glutamic acid. The polypeptide is Protein-glutamate methylesterase/protein-glutamine glutaminase 4 (Burkholderia thailandensis (strain ATCC 700388 / DSM 13276 / CCUG 48851 / CIP 106301 / E264)).